Consider the following 745-residue polypeptide: Immunoglobulin superfamily containing leucine-rich repeat protein 2 (745 aa).

The N-terminal stretch at 1–19 (MGPFGALCLAWALLGVVRA) is a signal peptide. Residues 20-51 (CPEPCACVDKYAHQFADCAYKELREVPEGLPA) form the LRRNT domain. Topologically, residues 20–589 (CPEPCACVDK…VFSTKKELPS (570 aa)) are extracellular. N-linked (GlcNAc...) asparagine glycans are attached at residues asparagine 52 and asparagine 73. LRR repeat units lie at residues 52-73 (NVTTLSLSANKITVLRRGAFVN), 76-97 (QVTSLWLAHSEVRTVESGALAV), 100-123 (QLKNLDLSHNLISNFPWSDLRNLS), 124-145 (ALQLLKMNHNRLGSLPRDALGA), and 148-169 (DLRSLRINNNRLRTLEPGTFDA). Residue asparagine 121 is glycosylated (N-linked (GlcNAc...) asparagine). Positions 181-232 (NPFHCSCGLVWLQAWAASTRVSLPEPDSIACASPPELQGVPVHRLPALPCAP) constitute an LRRCT domain. Positions 233-372 (PSVRLSAEPP…GTNSTSLRVT (140 aa)) constitute an Ig-like domain. Cysteine 260 and cysteine 356 are joined by a disulfide. Positions 290-300 (KEEDGGDKVED) are enriched in basic and acidic residues. The disordered stretch occupies residues 290–328 (KEEDGGDKVEDGEGDGDEDLPTQTEAPTPTPAPAWPAPP). The span at 317 to 328 (TPTPAPAWPAPP) shows a compositional bias: pro residues. Asparagine 338 and asparagine 365 each carry an N-linked (GlcNAc...) asparagine glycan. Residues 376-423 (AGPPKHAPGTGEEPDAQVPTSERKATTKGRSNSVLPFKPEGKTKGQGL) form a disordered region. N-linked (GlcNAc...) asparagine glycosylation is found at asparagine 474 and asparagine 563. Residues 590–610 (LLVIVTVSVFLLVLATVPLLG) traverse the membrane as a helical segment. At 611-745 (AACCHLLAKH…INGNYRQTAG (135 aa)) the chain is on the cytoplasmic side. The interval 654 to 697 (SEKSYPARGEAGGEEPEEVPEEGLDEDVEQGDPSGDLQREESLA) is disordered. The segment covering 665-683 (GGEEPEEVPEEGLDEDVEQ) has biased composition (acidic residues). Tyrosine 719 bears the Phosphotyrosine mark. Serine 720 bears the Phosphoserine mark.

Homomultimer. Interacts with NTRK1/TrkA. As to expression, at 11.5 dpc, expressed in spinal nerves, their roots and the ventral spinal cord. At 12.5 dpc, detected in the ventral spinal cord, dorsal root ganglia (DRG), dorsal and ventral roots and sympathetic chain ganglia. At 12.5 dpc, expressed in almost all motor neurons which also express RET and in almost all DRG sensory neurons which also express NTRK1. At 18.5 dpc, expressed only in a subset of NTRK1-expressing neurons but still expressed in nearly all RET-expressing neurons.

It localises to the cell membrane. Required for axon extension during neural development. This chain is Immunoglobulin superfamily containing leucine-rich repeat protein 2 (Islr2), found in Mus musculus (Mouse).